A 377-amino-acid chain; its full sequence is GTP 3',8-cyclase (377 aa).

The interval 1-29 (MTTRLYLSPTPPRNDREGASKSTSASIKH) is disordered. A Radical SAM core domain is found at 45 to 271 (RFGRIARDLR…FTLSPAKEPR (227 aa)). R54 is a binding site for GTP. [4Fe-4S] cluster is bound by residues C61 and C65. An S-adenosyl-L-methionine-binding site is contributed by Y67. C68 contributes to the [4Fe-4S] cluster binding site. Residue R105 participates in GTP binding. G109 is a binding site for S-adenosyl-L-methionine. T140 contacts GTP. S164 is an S-adenosyl-L-methionine binding site. K201 contacts GTP. M235 contacts S-adenosyl-L-methionine. Residues C304 and C307 each contribute to the [4Fe-4S] cluster site. 309 to 311 (RSR) serves as a coordination point for GTP. C321 lines the [4Fe-4S] cluster pocket.

The protein belongs to the radical SAM superfamily. MoaA family. As to quaternary structure, monomer and homodimer. The cofactor is [4Fe-4S] cluster.

It catalyses the reaction GTP + AH2 + S-adenosyl-L-methionine = (8S)-3',8-cyclo-7,8-dihydroguanosine 5'-triphosphate + 5'-deoxyadenosine + L-methionine + A + H(+). It participates in cofactor biosynthesis; molybdopterin biosynthesis. Functionally, catalyzes the cyclization of GTP to (8S)-3',8-cyclo-7,8-dihydroguanosine 5'-triphosphate. The protein is GTP 3',8-cyclase of Corynebacterium glutamicum (strain R).